The primary structure comprises 247 residues: Ribosomal RNA small subunit methyltransferase J (247 aa).

S-adenosyl-L-methionine-binding positions include 106–107 (RD), 122–123 (ER), and Asp-168.

Belongs to the methyltransferase superfamily. RsmJ family.

It is found in the cytoplasm. The enzyme catalyses guanosine(1516) in 16S rRNA + S-adenosyl-L-methionine = N(2)-methylguanosine(1516) in 16S rRNA + S-adenosyl-L-homocysteine + H(+). Specifically methylates the guanosine in position 1516 of 16S rRNA. This Alcanivorax borkumensis (strain ATCC 700651 / DSM 11573 / NCIMB 13689 / SK2) protein is Ribosomal RNA small subunit methyltransferase J.